The primary structure comprises 362 residues: Endopolygalacturonase II (362 aa).

The signal sequence occupies residues 1-21; it reads MHSFASLLAYGLVAGATFASA. A propeptide spanning residues 22 to 27 is cleaved from the precursor; that stretch reads SPIEAR. C30 and C45 are disulfide-bonded. One copy of the PbH1 1 repeat lies at 156–186; that stretch reads ANDITFTDVTINNADGDTQGGHNTDAFDVGN. D201 acts as the Proton donor in catalysis. C203 and C219 are joined by a disulfide. 4 PbH1 repeats span residues 209-229, 238-259, 267-289, and 301-322; these read GENI…SIGS, VKNV…RIKT, VSEI…VIQQ, and TNGV…DSGA. Residue H223 is part of the active site. N-linked (GlcNAc...) (high mannose) asparagine glycosylation is present at N240. Intrachain disulfides connect C329-C334 and C353-C362.

The protein belongs to the glycosyl hydrolase 28 family.

The protein resides in the secreted. The catalysed reaction is (1,4-alpha-D-galacturonosyl)n+m + H2O = (1,4-alpha-D-galacturonosyl)n + (1,4-alpha-D-galacturonosyl)m.. Functionally, involved in maceration and soft-rotting of plant tissue. Hydrolyzes the 1,4-alpha glycosidic bonds of de-esterified pectate in the smooth region of the plant cell wall. The protein is Endopolygalacturonase II (pgaII) of Aspergillus niger (strain ATCC 1015 / CBS 113.46 / FGSC A1144 / LSHB Ac4 / NCTC 3858a / NRRL 328 / USDA 3528.7).